A 360-amino-acid chain; its full sequence is Peptide chain release factor 1 (360 aa).

Position 236 is an N5-methylglutamine (Gln236).

It belongs to the prokaryotic/mitochondrial release factor family. In terms of processing, methylated by PrmC. Methylation increases the termination efficiency of RF1.

The protein localises to the cytoplasm. Peptide chain release factor 1 directs the termination of translation in response to the peptide chain termination codons UAG and UAA. This chain is Peptide chain release factor 1, found in Ligilactobacillus salivarius (strain UCC118) (Lactobacillus salivarius).